A 292-amino-acid polypeptide reads, in one-letter code: 1D-myo-inositol 2-acetamido-2-deoxy-alpha-D-glucopyranoside deacetylase (292 aa).

Zn(2+) is bound by residues histidine 12, aspartate 15, and histidine 147.

This sequence belongs to the MshB deacetylase family. It depends on Zn(2+) as a cofactor.

It catalyses the reaction 1D-myo-inositol 2-acetamido-2-deoxy-alpha-D-glucopyranoside + H2O = 1D-myo-inositol 2-amino-2-deoxy-alpha-D-glucopyranoside + acetate. Catalyzes the deacetylation of 1D-myo-inositol 2-acetamido-2-deoxy-alpha-D-glucopyranoside (GlcNAc-Ins) in the mycothiol biosynthesis pathway. This Rhodococcus jostii (strain RHA1) protein is 1D-myo-inositol 2-acetamido-2-deoxy-alpha-D-glucopyranoside deacetylase.